The primary structure comprises 78 residues: Large ribosomal subunit protein eL20 (78 aa).

Belongs to the eukaryotic ribosomal protein eL20 family. As to quaternary structure, part of the 50S ribosomal subunit. Binds 23S rRNA.

This chain is Large ribosomal subunit protein eL20, found in Pyrobaculum aerophilum (strain ATCC 51768 / DSM 7523 / JCM 9630 / CIP 104966 / NBRC 100827 / IM2).